Here is a 556-residue protein sequence, read N- to C-terminus: Secreted RxLR effector protein 114 (556 aa).

Positions 1–19 (MCGAHFVAIALLVAAGCQT) are cleaved as a signal peptide. 3 disordered regions span residues 43-76 (LQSR…GVLK), 108-138 (NQLK…DSDK), and 389-408 (NDKS…EDWN). The RxLR-dEER signature appears at 46–66 (RNLRESRDSKDDLLSAGDEER). Over residues 47 to 67 (NLRESRDSKDDLLSAGDEERT) the composition is skewed to basic and acidic residues.

It belongs to the RxLR effector family.

The protein localises to the secreted. It is found in the host cell. Secreted effector that partially suppresses the host cell death induced by cell death-inducing proteins. This is Secreted RxLR effector protein 114 from Plasmopara viticola (Downy mildew of grapevine).